We begin with the raw amino-acid sequence, 465 residues long: MDFLPLFHSLQGRLALVVGGGEVALRKARLLADAGARLRVVAPQIHIELRHLVEQGGGELLERDYQDGDQPGCALIIAATDDEPLNAEVSRAANARGIPVNVVDAPALCSVIFPAIVDRSPLVVAVSSGGDAPVLARLIRAKLETWIPSSYGQLAGLASRFRNRVKELLPDLQQRRVFWENLFQGEIAERVLAGRPAEAERLLEERLAGGLAHMATGEVYLVGAGPGDPDLLTFRALRLMQQADVVLYDRLVAPAILELCRRDAERLYVGKRRAEHAVPQERINRLLVELASQGKRVLRLKGGDPFIFGRGGEEIDELAAHGIPFQVVPGITAASGCAAYAGIPLTHRDHAQSVRFVTGHLKDGTTDLPWKDLVAPGQTLVFYMGLVGLPVICEQLVAHGRSAQTPAALIQQGTTAQQRVFSGTLENLPQLVAEHEVHAPTLVIVGEVVQLRDKLAWFEGAREGA.

The segment at 1–203 is precorrin-2 dehydrogenase /sirohydrochlorin ferrochelatase; the sequence is MDFLPLFHSL…GRPAEAERLL (203 aa). Residues 22-23 and 43-44 contribute to the NAD(+) site; these read EV and PQ. Ser128 is subject to Phosphoserine. The uroporphyrinogen-III C-methyltransferase stretch occupies residues 217–465; sequence GEVYLVGAGP…AWFEGAREGA (249 aa). Pro226 lines the S-adenosyl-L-methionine pocket. Residue Asp249 is the Proton acceptor of the active site. The active-site Proton donor is the Lys271. Residues 302 to 304, Ile307, 332 to 333, Met384, and Gly413 each bind S-adenosyl-L-methionine; these read GGD and TA.

It in the N-terminal section; belongs to the precorrin-2 dehydrogenase / sirohydrochlorin ferrochelatase family. The protein in the C-terminal section; belongs to the precorrin methyltransferase family.

It carries out the reaction uroporphyrinogen III + 2 S-adenosyl-L-methionine = precorrin-2 + 2 S-adenosyl-L-homocysteine + H(+). The catalysed reaction is precorrin-2 + NAD(+) = sirohydrochlorin + NADH + 2 H(+). The enzyme catalyses siroheme + 2 H(+) = sirohydrochlorin + Fe(2+). It participates in cofactor biosynthesis; adenosylcobalamin biosynthesis; precorrin-2 from uroporphyrinogen III: step 1/1. The protein operates within cofactor biosynthesis; adenosylcobalamin biosynthesis; sirohydrochlorin from precorrin-2: step 1/1. It functions in the pathway porphyrin-containing compound metabolism; siroheme biosynthesis; precorrin-2 from uroporphyrinogen III: step 1/1. Its pathway is porphyrin-containing compound metabolism; siroheme biosynthesis; siroheme from sirohydrochlorin: step 1/1. It participates in porphyrin-containing compound metabolism; siroheme biosynthesis; sirohydrochlorin from precorrin-2: step 1/1. Its function is as follows. Multifunctional enzyme that catalyzes the SAM-dependent methylations of uroporphyrinogen III at position C-2 and C-7 to form precorrin-2 via precorrin-1. Then it catalyzes the NAD-dependent ring dehydrogenation of precorrin-2 to yield sirohydrochlorin. Finally, it catalyzes the ferrochelation of sirohydrochlorin to yield siroheme. The sequence is that of Siroheme synthase from Pseudomonas paraeruginosa (strain DSM 24068 / PA7) (Pseudomonas aeruginosa (strain PA7)).